The primary structure comprises 360 residues: Diacylglycerol O-acyltransferase 3 (360 aa).

Residues 153 to 182 (KAKAMKKMTEMDSESSSSSESSDSDCDKGK) are disordered. [2Fe-2S] cluster-binding residues include cysteine 265, cysteine 270, cysteine 298, and cysteine 302.

Belongs to the diacylglycerol acyltransferase family. Requires [2Fe-2S] cluster as cofactor.

It catalyses the reaction an acyl-CoA + a 1,2-diacyl-sn-glycerol = a triacyl-sn-glycerol + CoA. It functions in the pathway glycerolipid metabolism; triacylglycerol biosynthesis. Functionally, involved in triacylglycerol (TAG) biosynthesis. Catalyzes the acylation of the sn-3 hydroxy group of sn-1,2-diacylglycerol using acyl-CoA. May preferentially use linolenoyl-CoA as substrate and to a lesser extent linoleoyl-CoA. May contribute to the active recycling of linoleate and linolenate into TAG when seed oil breakdown is blocked. This is Diacylglycerol O-acyltransferase 3 from Arabidopsis thaliana (Mouse-ear cress).